The sequence spans 587 residues: Proteasome-associated ATPase (587 aa).

Residues 9–94 (ARKAQHDAEI…KEEVDRLAQP (86 aa)) are a coiled coil. 276-281 (GCGKTL) is an ATP binding site. Positions 586 to 587 (YL) are docks into pockets in the proteasome alpha-ring.

The protein belongs to the AAA ATPase family. Homohexamer. Assembles into a hexameric ring structure that caps the 20S proteasome core. Strongly interacts with the prokaryotic ubiquitin-like protein Pup through a hydrophobic interface; the interacting region of ARC lies in its N-terminal coiled-coil domain. There is one Pup binding site per ARC hexamer ring. Upon ATP-binding, the C-terminus of ARC interacts with the alpha-rings of the proteasome core, possibly by binding to the intersubunit pockets.

Its pathway is protein degradation; proteasomal Pup-dependent pathway. Its function is as follows. ATPase which is responsible for recognizing, binding, unfolding and translocation of pupylated proteins into the bacterial 20S proteasome core particle. May be essential for opening the gate of the 20S proteasome via an interaction with its C-terminus, thereby allowing substrate entry and access to the site of proteolysis. Thus, the C-termini of the proteasomal ATPase may function like a 'key in a lock' to induce gate opening and therefore regulate proteolysis. This is Proteasome-associated ATPase from Thermomonospora curvata (strain ATCC 19995 / DSM 43183 / JCM 3096 / KCTC 9072 / NBRC 15933 / NCIMB 10081 / Henssen B9).